The following is a 100-amino-acid chain: Putative antiporter subunit mnhF2 (100 aa).

3 helical membrane passes run 6–26 (TNFF…IGLF), 38–58 (VVAF…VSVI), and 62–82 (VSFL…SVSI).

Belongs to the CPA3 antiporters (TC 2.A.63) subunit F family. In terms of assembly, may form a heterooligomeric complex that consists of seven subunits: mnhA2, mnhB2, mnhC2, mnhD2, mnhE2, mnhF2 and mnhG2.

The protein localises to the cell membrane. The sequence is that of Putative antiporter subunit mnhF2 (mnhF2) from Staphylococcus haemolyticus (strain JCSC1435).